Here is a 1102-residue protein sequence, read N- to C-terminus: Probable ubiquitin-conjugating enzyme E2 23 (1102 aa).

Disordered regions lie at residues 1–20, 25–111, 396–418, 579–602, 661–710, and 760–800; these read MEHE…DSSV, ASLS…DGNY, LPKV…PVHE, SPGN…SHQE, DESV…DIYA, and QAES…KNIL. A compositionally biased stretch (basic and acidic residues) spans 31-44; it reads DSEHPNIYRQDIVK. The span at 59-88 shows a compositional bias: acidic residues; it reads GDSDSDSDISDEEEDDDDDEDNDDDDEDVE. The segment covering 579 to 596 has biased composition (polar residues); the sequence is SPGNSFEEATQQDNGYQD. Residues 779 to 800 are compositionally biased toward polar residues; the sequence is SKVNVTDNCESKGTQANAKNIL. The region spanning 850–1010 is the UBC core domain; the sequence is QWFKKVDQDW…TFLLNCKTMM (161 aa). The active-site Glycyl thioester intermediate is cysteine 936.

The protein belongs to the ubiquitin-conjugating enzyme family.

The catalysed reaction is S-ubiquitinyl-[E1 ubiquitin-activating enzyme]-L-cysteine + [E2 ubiquitin-conjugating enzyme]-L-cysteine = [E1 ubiquitin-activating enzyme]-L-cysteine + S-ubiquitinyl-[E2 ubiquitin-conjugating enzyme]-L-cysteine.. It participates in protein modification; protein ubiquitination. Accepts the ubiquitin from the E1 complex and catalyzes its covalent attachment to other proteins. The polypeptide is Probable ubiquitin-conjugating enzyme E2 23 (UBC23) (Arabidopsis thaliana (Mouse-ear cress)).